The following is a 142-amino-acid chain: Hemoglobin subunit alpha-2 (142 aa).

One can recognise a Globin domain in the interval 2 to 142 (VLSPADKTNV…VSTVLTSKYR (141 aa)). Histidine 59 provides a ligand contact to O2. Histidine 88 is a heme b binding site.

This sequence belongs to the globin family. In terms of assembly, heterotetramer of two alpha chains and two beta chains. As to expression, red blood cells.

Involved in oxygen transport from the lung to the various peripheral tissues. Its function is as follows. Hemopressin acts as an antagonist peptide of the cannabinoid receptor CNR1. Hemopressin-binding efficiently blocks cannabinoid receptor CNR1 and subsequent signaling. In Hylobates lar (Lar gibbon), this protein is Hemoglobin subunit alpha-2 (HBA2).